The chain runs to 222 residues: 7-cyano-7-deazaguanine synthase (222 aa).

11 to 21 (LSGGMDSAVLL) serves as a coordination point for ATP. Residues Cys-192, Cys-200, Cys-203, and Cys-206 each contribute to the Zn(2+) site.

This sequence belongs to the QueC family. It depends on Zn(2+) as a cofactor.

The enzyme catalyses 7-carboxy-7-deazaguanine + NH4(+) + ATP = 7-cyano-7-deazaguanine + ADP + phosphate + H2O + H(+). Its pathway is purine metabolism; 7-cyano-7-deazaguanine biosynthesis. Its function is as follows. Catalyzes the ATP-dependent conversion of 7-carboxy-7-deazaguanine (CDG) to 7-cyano-7-deazaguanine (preQ(0)). The protein is 7-cyano-7-deazaguanine synthase of Sulfurihydrogenibium sp. (strain YO3AOP1).